A 770-amino-acid polypeptide reads, in one-letter code: Signal transducer and activator of transcription 3 (770 aa).

An N-acetylalanine modification is found at A2. K49 and K87 each carry N6-acetyllysine. Residues 150–162 (DVRKRVQDLEQKM) carry the Essential for nuclear import motif. The 91-residue stretch at 580 to 670 (WNEGYIMGFI…DATNILVSPL (91 aa)) folds into the SH2 domain. Allysine; alternate occurs at positions 601, 615, and 631. An N6-acetyllysine; alternate mark is found at K601, K615, and K631. Position 640 is a phosphotyrosine; by TYK2 (Y640). K685 carries the allysine; alternate modification. K685 is subject to N6-acetyllysine; alternate. At Y705 the chain carries Phosphotyrosine; by FER and PTK6. K707 is subject to N6-acetyllysine. The residue at position 714 (T714) is a Phosphothreonine. S727 bears the Phosphoserine; by DYRK2, NLK, NEK6, IRAK1, RPS6KA5, ZIPK/DAPK3 and PKC/PRKCE mark.

Belongs to the transcription factor STAT family. In terms of assembly, forms a homodimer or a heterodimer with a related family member (at least STAT1). Component of a promoter-binding complex composed of STAT3, NFATC3 and NFATC4; complex formation is enhanced by calcineurin. Interacts with IL31RA, NCOA1, PELP1, SIPAR, SOCS7, STATIP1 and TMF1. Interacts with IL23R in presence of IL23. Interacts (via SH2 domain) with NLK. Interacts with ARL2BP; the interaction is enhanced by LIF and JAK1 expression. Interacts with KPNA4 and KPNA5; KPNA4 may be the primary mediator of nuclear import. Interacts with CAV2; the interaction is increased on insulin-induced tyrosine phosphorylation of CAV2 and leads to STAT3 activation. Interacts with ARL2BP; interaction is enhanced with ARL2. Interacts with NEK6. Binds to CDK9 when activated and nuclear. Interacts with BMX. Interacts with ZIPK/DAPK3. Interacts with PIAS3; the interaction occurs on stimulation by IL6, CNTF or OSM and inhibits the DNA binding activity of STAT3. In prostate cancer cells, interacts with PRKCE and promotes DNA binding activity of STAT3. Interacts with STMN3, antagonizing its microtubule-destabilizing activity. Interacts with the 'Lys-129' acetylated form of BIRC5/survivin. Interacts with FER. Interacts (via SH2 domain) with EIF2AK2/PKR (via the kinase catalytic domain). Interacts with INPP5F; the interaction is independent of STAT3 Tyr-705 phosphorylation status. Interacts with FGFR4. Interacts with OCIAD1 and OCIAD2. Interacts (unphosphorylated or phosphorylated at Ser-727) with PHB1. Interacts and may form heterodimers with NHLH1. Found in a complex with SLC39A6, SLC39A10 and with the 'Ser-727' phosphorylated form of STAT3 throughout mitosis. Interacts (when acetylated) with EP300 (via bromo domain); interaction takes place following STAT3 acetylation by EP300 and promotes enhanceosome assembly. Interacts (when acetylated) with BRD2 (via bromo domain); interaction promotes STAT3 recruitment to chromatin and T-helper Th17 cell differentiation. Interacts with FAM220A/SIPAR; the interaction occurs in both the nucleus and the cytoplasm, is enhanced by IL6 and promotes STAT3 dephosphorylation. Interacts in both unphosphorylated and phosphorylated forms with FAM220A but interacts preferentially in the phosphorylated form in the nucleus. Interacts with PTPN2; the interaction is promoted by FAM220A and leads to STAT3 dephosphorylation which negatively regulates STAT3 transcriptional activator activity. Post-translationally, activated through tyrosine phosphorylation by BMX. Tyrosine phosphorylated in response to IL6, IL11, CNTF, LIF, KITLG/SCF, CSF1, EGF, PDGF, IFN-alpha and OSM. Activated KIT promotes phosphorylation on tyrosine residues and subsequent translocation to the nucleus. Tyrosine phosphorylated in response to constitutively activated FGFR1, FGFR2, FGFR3 and FGFR4. Phosphorylated on serine upon DNA damage, probably by ATM or ATR. Serine phosphorylation is important for the formation of stable DNA-binding STAT3 homodimers and maximal transcriptional activity. ARL2BP may participate in keeping the phosphorylated state of STAT3 within the nucleus. Tyrosine phosphorylated upon stimulation with EGF. Upon LPS challenge, phosphorylated within the nucleus by IRAK1. Phosphorylated on Ser-727 by RPS6KA5. Dephosphorylation on tyrosine residues by PTPN2 negatively regulates IL6/interleukin-6 signaling. Phosphorylation at Tyr-705 by FER, isoform M2 of PKM (PKM2) or PTK6 leads to an increase of its transcriptional activity. Phosphorylation at Tyr-705 is increased in the presence of calcineurin. Phosphorylation at Tyr-640 by TYK2 negatively regulates transcriptional activity. Acetylated on lysine residues by EP300/p300, promoting its activation. Acetylation at Lys-49 and Lys-87 by EP300/p300 promotes its activation. Acetylation at Lys-87 by EP300/p300 promotes its association with BRD2 and recruitment to chromatin. Deacetylated at Lys-49 and Lys-87 by HDAC1. Acetylation at Lys-685 by EP300/p300 promotes its homodimerization and activation. Deacetylated at Lys-685 by HDAC3. Acetylated on lysine residues by CREBBP. Deacetylation by LOXL3 leads to disrupt STAT3 dimerization and inhibit STAT3 transcription activity. Oxidation of lysine residues to allysine on STAT3 preferentially takes place on lysine residues that are acetylated. In terms of processing, some lysine residues are oxidized to allysine by LOXL3, leading to disrupt STAT3 dimerization and inhibit STAT3 transcription activity. Oxidation of lysine residues to allysine on STAT3 preferentially takes place on lysine residues that are acetylated. As to expression, detected in lung, heart, oviduct, ovary, uterus and kidney (at protein level). Detected in ovary, oviduct, and at lower levels in uterus and lung.

It is found in the cytoplasm. It localises to the nucleus. Signal transducer and transcription activator that mediates cellular responses to interleukins, KITLG/SCF, LEP and other growth factors. Once activated, recruits coactivators, such as NCOA1 or MED1, to the promoter region of the target gene. May mediate cellular responses to activated FGFR1, FGFR2, FGFR3 and FGFR4. Upon activation of IL6ST/gp130 signaling by interleukin-6 (IL6), binds to the IL6-responsive elements identified in the promoters of various acute-phase protein genes. Activated by IL31 through IL31RA. Acts as a regulator of inflammatory response by regulating differentiation of naive CD4(+) T-cells into T-helper Th17 or regulatory T-cells (Treg): acetylation promotes its transcription activity and cell differentiation while deacetylation and oxidation of lysine residues by LOXL3 inhibits differentiation. Involved in cell cycle regulation by inducing the expression of key genes for the progression from G1 to S phase, such as CCND1. Mediates the effects of LEP on melanocortin production, body energy homeostasis and lactation. May play an apoptotic role by transctivating BIRC5 expression under LEP activation. Cytoplasmic STAT3 represses macroautophagy by inhibiting EIF2AK2/PKR activity. Plays a crucial role in basal beta cell functions, such as regulation of insulin secretion. Following JAK/STAT signaling activation and as part of a complex with NFATC3 and NFATC4, binds to the alpha-beta E4 promoter region of CRYAB and activates transcription in cardiomyocytes. Plays an important role in host defense in methicillin-resistant S.aureus lung infection by regulating the expression of the antimicrobial lectin REG3G. The polypeptide is Signal transducer and activator of transcription 3 (STAT3) (Sus scrofa (Pig)).